A 323-amino-acid polypeptide reads, in one-letter code: L-lactate dehydrogenase 1 (323 aa).

Residues Val17, Asp38, Arg43, Tyr68, and 82-83 (GA) contribute to the NAD(+) site. The substrate site is built by Gln85 and Arg91. NAD(+) contacts are provided by residues Ser104, 121 to 123 (AAN), and Ser146. 123–126 (NPVD) provides a ligand contact to substrate. 151–154 (DTGR) lines the substrate pocket. Catalysis depends on His178, which acts as the Proton acceptor. At Tyr223 the chain carries Phosphotyrosine. Substrate is bound at residue Thr232.

Belongs to the LDH/MDH superfamily. LDH family. As to quaternary structure, homotetramer.

The protein resides in the cytoplasm. It catalyses the reaction (S)-lactate + NAD(+) = pyruvate + NADH + H(+). It functions in the pathway fermentation; pyruvate fermentation to lactate; (S)-lactate from pyruvate: step 1/1. Functionally, catalyzes the conversion of lactate to pyruvate. The polypeptide is L-lactate dehydrogenase 1 (Lactobacillus johnsonii (strain CNCM I-12250 / La1 / NCC 533)).